The following is a 658-amino-acid chain: Endoglin (658 aa).

The signal sequence occupies residues 1–25 (MDRGTLPLAVALLLASCSLSPTSLA). Positions 26 to 46 (ETVHCDLQPVGPERGEVTYTT) are OR1, N-terminal part. The tract at residues 26–337 (ETVHCDLQPV…SSCGGRLQTS (312 aa)) is required for interaction with GDF2. At 26–586 (ETVHCDLQPV…PDLSGCTSKG (561 aa)) the chain is on the extracellular side. Disulfide bonds link C30/C207, C53/C182, C242/C330, C350/C382, C363/C442, C394/C412, and C493/C549. Residues 47-199 (SQVSKGCVAQ…MGRTLEWRPR (153 aa)) form an OR2 region. N-linked (GlcNAc...) asparagine glycans are attached at residues N88, N102, N121, and N134. The tract at residues 200–330 (TPALVRGCHL…SIVSLHASSC (131 aa)) is OR1, C-terminal part. Residues 270–282 (QIWTTGEYSFKIF) are essential for interaction with GDF2. Residue N307 is glycosylated (N-linked (GlcNAc...) asparagine). Residues 363-533 (CADDAMTLVL…PEGDPRFSFL (171 aa)) form the ZP domain. A Cell attachment site motif is present at residues 399-401 (RGD). The chain crosses the membrane as a helical span at residues 587-611 (LVLPAVLGITFGAFLIGALLTAALW). The Cytoplasmic portion of the chain corresponds to 612–658 (YIYSHTRSPSKREPVVAVAAPASSESSSTNHSIGSTQSTPCSTSSMA). Residues 626 to 639 (VVAVAAPASSESSS) are compositionally biased toward low complexity. Residues 626–658 (VVAVAAPASSESSSTNHSIGSTQSTPCSTSSMA) are disordered. The segment covering 640–658 (TNHSIGSTQSTPCSTSSMA) has biased composition (polar residues). S646 and S649 each carry phosphoserine; by TGFBR1.

Homodimer; disulfide-linked. Forms a heteromeric complex with the signaling receptors for transforming growth factor-beta: TGFBR1 and/or TGFBR2. It is able to bind TGFB1 and TGFB2 with high affinity, but not TGFB3. Interacts with GDF2, forming a heterotetramer with a 2:2 stoichiometry. Interacts with ACVRL1. Can form a heteromeric complex with GDF2 and ACVRL1. Interacts with BMP10. Interacts with DYNLT4. Interacts with ARRB2. Detected on umbilical veil endothelial cells. Detected in placenta (at protein level). Detected on endothelial cells.

The protein resides in the cell membrane. Functionally, vascular endothelium glycoprotein that plays an important role in the regulation of angiogenesis. Required for normal structure and integrity of adult vasculature. Regulates the migration of vascular endothelial cells. Required for normal extraembryonic angiogenesis and for embryonic heart development. May regulate endothelial cell shape changes in response to blood flow, which drive vascular remodeling and establishment of normal vascular morphology during angiogenesis. May play a critical role in the binding of endothelial cells to integrins and/or other RGD receptors. Acts as a TGF-beta coreceptor and is involved in the TGF-beta/BMP signaling cascade that ultimately leads to the activation of SMAD transcription factors. Required for GDF2/BMP9 signaling through SMAD1 in endothelial cells and modulates TGFB1 signaling through SMAD3. This chain is Endoglin (ENG), found in Homo sapiens (Human).